Here is a 277-residue protein sequence, read N- to C-terminus: MGLLECCARCLVGAPFASLVATGLCFFGVALFCGCGHEALTGTEKLIETYFSKNYQDYEYLINVIHAFQYVIYGTASFFFLYGALLLAEGFYTTGAVRQIFGDYKTTICGKGLSATVTGGQKGRGSRGQHQAHSLERVCHCLGKWLGHPDKFVGITYALTVVWLLVFACSAVPVYIYFNTWTTCQSIAFPSKTSASIGTLCADARMYGVLPWNAFPGKVCGSNLLSICKTAEFQMTFHLFIAAFVGAAATLVSLLTFMIAATYNFAVLKLMGRGTKF.

Topologically, residues methionine 1–cysteine 10 are cytoplasmic. Residues cysteine 6, cysteine 7, and cysteine 10 are each lipidated (S-palmitoyl cysteine). Residues leucine 11–glycine 36 form a helical membrane-spanning segment. Topologically, residues histidine 37–glutamate 59 are extracellular. The helical transmembrane segment at tyrosine 60–alanine 88 threads the bilayer. Residues glutamate 89–lysine 151 lie on the Cytoplasmic side of the membrane. Residue cysteine 109 is the site of S-palmitoyl cysteine attachment. Serine 114 is subject to Phosphoserine. A phosphothreonine mark is found at threonine 116 and threonine 118. 2 S-palmitoyl cysteine lipidation sites follow: cysteine 139 and cysteine 141. The helical transmembrane segment at phenylalanine 152–phenylalanine 178 threads the bilayer. Over asparagine 179 to histidine 238 the chain is Extracellular. 2 cysteine pairs are disulfide-bonded: cysteine 184–cysteine 228 and cysteine 201–cysteine 220. A lipid anchor (O-palmitoyl threonine) is attached at threonine 199. The helical transmembrane segment at leucine 239 to leucine 268 threads the bilayer. The Cytoplasmic portion of the chain corresponds to lysine 269–phenylalanine 277.

Belongs to the myelin proteolipid protein family. As to quaternary structure, interacts with MAL.

The protein resides in the cell membrane. The protein localises to the myelin membrane. In terms of biological role, this is the major myelin protein from the central nervous system. It plays an important role in the formation or maintenance of the multilamellar structure of myelin. The sequence is that of Myelin proteolipid protein (PLP1) from Oryctolagus cuniculus (Rabbit).